Consider the following 142-residue polypeptide: Large ribosomal subunit protein uL11 (142 aa).

This sequence belongs to the universal ribosomal protein uL11 family. Part of the ribosomal stalk of the 50S ribosomal subunit. Interacts with L10 and the large rRNA to form the base of the stalk. L10 forms an elongated spine to which L12 dimers bind in a sequential fashion forming a multimeric L10(L12)X complex. One or more lysine residues are methylated.

Functionally, forms part of the ribosomal stalk which helps the ribosome interact with GTP-bound translation factors. This is Large ribosomal subunit protein uL11 from Colwellia psychrerythraea (strain 34H / ATCC BAA-681) (Vibrio psychroerythus).